The sequence spans 204 residues: Dephospho-CoA kinase (204 aa).

The DPCK domain maps to Arg-13–Val-204. Ala-21 to Thr-26 provides a ligand contact to ATP.

This sequence belongs to the CoaE family.

Its subcellular location is the cytoplasm. It catalyses the reaction 3'-dephospho-CoA + ATP = ADP + CoA + H(+). It functions in the pathway cofactor biosynthesis; coenzyme A biosynthesis; CoA from (R)-pantothenate: step 5/5. Catalyzes the phosphorylation of the 3'-hydroxyl group of dephosphocoenzyme A to form coenzyme A. The protein is Dephospho-CoA kinase of Prochlorococcus marinus subsp. pastoris (strain CCMP1986 / NIES-2087 / MED4).